A 346-amino-acid chain; its full sequence is Centromere protein L (346 aa).

Residue serine 41 is modified to Phosphoserine. Position 45 is a phosphothreonine (threonine 45). At serine 55 the chain carries Phosphoserine.

This sequence belongs to the CENP-L/IML3 family. Component of the CENPA-CAD complex, composed of CENPI, CENPK, CENPL, CENPO, CENPP, CENPQ, CENPR and CENPS. The CENPA-CAD complex interacts with the CENPA-NAC complex, at least composed of CENPA, CENPC, CENPH, CENPM, CENPN, CENPT and CENPU.

It localises to the nucleus. The protein localises to the chromosome. The protein resides in the centromere. Its function is as follows. Component of the CENPA-CAD (nucleosome distal) complex, a complex recruited to centromeres which is involved in assembly of kinetochore proteins, mitotic progression and chromosome segregation. May be involved in incorporation of newly synthesized CENPA into centromeres via its interaction with the CENPA-NAC complex. This Bos taurus (Bovine) protein is Centromere protein L (CENPL).